The sequence spans 232 residues: MITLAIPSKGRLKEQALEVLAKAGLAISLPGDERKYHARVEGLDNVEIAFLSASEIAGEIGQGAVDLGITGEDLVRENLADWEARAEIAARLGFGHADVVVAVPEIWLDVDTMADLDDVAADFRQRHGRRLRIATKYWRLTQQFFSQKHGIQVYRIVESLGATEGAPAAGLADVIVDITTTGSTLRANHLKVLGDGVVLKSQACLVASKKARTAGDEATLRDIVTKMAAAVG.

This sequence belongs to the ATP phosphoribosyltransferase family. Short subfamily. In terms of assembly, heteromultimer composed of HisG and HisZ subunits.

It is found in the cytoplasm. It catalyses the reaction 1-(5-phospho-beta-D-ribosyl)-ATP + diphosphate = 5-phospho-alpha-D-ribose 1-diphosphate + ATP. Its pathway is amino-acid biosynthesis; L-histidine biosynthesis; L-histidine from 5-phospho-alpha-D-ribose 1-diphosphate: step 1/9. In terms of biological role, catalyzes the condensation of ATP and 5-phosphoribose 1-diphosphate to form N'-(5'-phosphoribosyl)-ATP (PR-ATP). Has a crucial role in the pathway because the rate of histidine biosynthesis seems to be controlled primarily by regulation of HisG enzymatic activity. The sequence is that of ATP phosphoribosyltransferase (hisG) from Mesorhizobium japonicum (strain LMG 29417 / CECT 9101 / MAFF 303099) (Mesorhizobium loti (strain MAFF 303099)).